Reading from the N-terminus, the 142-residue chain is MAKEITKIIKLQINAGAANPSPPVGPALGQAGVNIMAFCKEFNAATQKQAGDLLPTVITVYKDKSFSFITKQPPGSVLLKKAAGVASGSGEPNKKKVATLSKAKLMEVVNTKLPDLNTKDPERAARILAGQARQMGIEVEGM.

This sequence belongs to the universal ribosomal protein uL11 family. In terms of assembly, part of the ribosomal stalk of the 50S ribosomal subunit. Interacts with L10 and the large rRNA to form the base of the stalk. L10 forms an elongated spine to which L12 dimers bind in a sequential fashion forming a multimeric L10(L12)X complex. Post-translationally, one or more lysine residues are methylated.

In terms of biological role, forms part of the ribosomal stalk which helps the ribosome interact with GTP-bound translation factors. The protein is Large ribosomal subunit protein uL11 of Akkermansia muciniphila (strain ATCC BAA-835 / DSM 22959 / JCM 33894 / BCRC 81048 / CCUG 64013 / CIP 107961 / Muc).